The following is a 124-amino-acid chain: Small ribosomal subunit protein uS12c (124 aa).

The protein belongs to the universal ribosomal protein uS12 family. Part of the 30S ribosomal subunit.

The protein localises to the plastid. It is found in the chloroplast. Its function is as follows. With S4 and S5 plays an important role in translational accuracy. Located at the interface of the 30S and 50S subunits. The chain is Small ribosomal subunit protein uS12c (rps12) from Cyanidium caldarium (Red alga).